The chain runs to 245 residues: Eukaryotic translation initiation factor 6 (245 aa).

A Phosphotyrosine modification is found at Tyr-113. The residue at position 165 (Thr-165) is a Phosphothreonine. Ser-166 carries the phosphoserine modification. 2 positions are modified to phosphoserine; by CK1: Ser-174 and Ser-175. The residue at position 235 (Ser-235) is a Phosphoserine; by PKC. Phosphoserine occurs at positions 239 and 243.

Belongs to the eIF-6 family. As to quaternary structure, monomer. Associates with the 60S ribosomal subunit. Interacts with RACK1. Interacts with DICER1, AGO2, TARBP2, MOV10 and RPL7A; they form a large RNA-induced silencing complex (RISC). Post-translationally, phosphorylation at Ser-174 and Ser-175 by CSNK1D/CK1 promotes nuclear export. Ufmylated by UFL1. As to expression, expressed at very high levels in colon carcinoma with lower levels in normal colon and ileum and lowest levels in kidney and muscle (at protein level).

The protein localises to the cytoplasm. It localises to the nucleus. It is found in the nucleolus. In terms of biological role, binds to the 60S ribosomal subunit and prevents its association with the 40S ribosomal subunit to form the 80S initiation complex in the cytoplasm. Behaves as a stimulatory translation initiation factor downstream insulin/growth factors. Is also involved in ribosome biogenesis. Associates with pre-60S subunits in the nucleus and is involved in its nuclear export. Cytoplasmic release of TIF6 from 60S subunits and nuclear relocalization is promoted by a RACK1 (RACK1)-dependent protein kinase C activity. In tissues responsive to insulin, controls fatty acid synthesis and glycolysis by exerting translational control of adipogenic transcription factors such as CEBPB, CEBPD and ATF4 that have G/C rich or uORF in their 5'UTR. Required for ROS-dependent megakaryocyte maturation and platelets formation, controls the expression of mitochondrial respiratory chain genes involved in reactive oxygen species (ROS) synthesis. Involved in miRNA-mediated gene silencing by the RNA-induced silencing complex (RISC). Required for both miRNA-mediated translational repression and miRNA-mediated cleavage of complementary mRNAs by RISC. Modulates cell cycle progression and global translation of pre-B cells, its activation seems to be rate-limiting in tumorigenesis and tumor growth. This is Eukaryotic translation initiation factor 6 from Homo sapiens (Human).